A 403-amino-acid chain; its full sequence is Palmitoyltransferase ZDHHC23-A (403 aa).

The Cytoplasmic portion of the chain corresponds to 1 to 70; it reads MKRERFKPPE…ADRLGVSCCT (70 aa). A helical membrane pass occupies residues 71 to 91; the sequence is VGPLRLELSVLPPMVLIPGLL. Residue arginine 92 is a topological domain, lumenal. Residues 93 to 113 traverse the membrane as a helical segment; that stretch reads VAAINCLLGVIILTALPLLVL. Topologically, residues 114-125 are cytoplasmic; that stretch reads WYYYMTHRRKRR. Residues 126–146 form a helical membrane-spanning segment; it reads TLFFLSLALFSLAYMYYLFLT. The Lumenal portion of the chain corresponds to 147-153; sequence EIVPRGD. Residues 154-174 traverse the membrane as a helical segment; sequence VTHLQVVTATTGMMLTLISLV. The Cytoplasmic segment spans residues 175–268; that stretch reads RTKQGPGFVK…NSCVGQANHR (94 aa). The DHHC domain maps to 225–275; the sequence is KKCPVCQLVRPPRAGHCRICGACVLRMDHHCVWINSCVGQANHRQFILTLL. The active-site S-palmitoyl cysteine intermediate is cysteine 255. A helical transmembrane segment spans residues 269–289; sequence QFILTLLLFLLTSFYGISLVL. The Lumenal portion of the chain corresponds to 290-319; sequence RSICPKQSLFTAMLYCPGVYNQYSTALCFT. Residues 320–340 form a helical membrane-spanning segment; sequence CVWYSVIITGGLLHLFILQII. Topologically, residues 341-403 are cytoplasmic; it reads NVSCNVTERE…GSSLNLTDMV (63 aa).

The protein belongs to the DHHC palmitoyltransferase family.

It localises to the golgi apparatus membrane. The protein localises to the golgi apparatus. The protein resides in the trans-Golgi network membrane. It catalyses the reaction L-cysteinyl-[protein] + hexadecanoyl-CoA = S-hexadecanoyl-L-cysteinyl-[protein] + CoA. Functionally, palmitoyltransferase that could catalyze the addition of palmitate onto various protein substrates and be involved in a variety of cellular processes. This chain is Palmitoyltransferase ZDHHC23-A (zdhhc23a), found in Danio rerio (Zebrafish).